The sequence spans 145 residues: Transcription antitermination protein NusB (145 aa).

The protein belongs to the NusB family.

Functionally, involved in transcription antitermination. Required for transcription of ribosomal RNA (rRNA) genes. Binds specifically to the boxA antiterminator sequence of the ribosomal RNA (rrn) operons. The chain is Transcription antitermination protein NusB from Geotalea daltonii (strain DSM 22248 / JCM 15807 / FRC-32) (Geobacter daltonii).